Consider the following 159-residue polypeptide: MTDAATLSTAGFDLTPPTEAERERLEANLTAEEARVLLHHGTEAPFCGGLLGEKSPGVYGCRLCGLPLFKHETKFESGTGWPSFYAPFAEDHVVGVRDTSYGMVRIETRCARCDSHQGHVFPDGPAPTRLRYCINSVSLQFVKAGAPLPDPLHRGDKIT.

Residues 22-144 form the MsrB domain; that stretch reads RERLEANLTA…NSVSLQFVKA (123 aa). Zn(2+) contacts are provided by C61, C64, C110, and C113. The active-site Nucleophile is the C133.

The protein belongs to the MsrB Met sulfoxide reductase family. Requires Zn(2+) as cofactor.

The catalysed reaction is L-methionyl-[protein] + [thioredoxin]-disulfide + H2O = L-methionyl-(R)-S-oxide-[protein] + [thioredoxin]-dithiol. The sequence is that of Peptide methionine sulfoxide reductase MsrB from Caulobacter vibrioides (strain ATCC 19089 / CIP 103742 / CB 15) (Caulobacter crescentus).